A 449-amino-acid chain; its full sequence is Biotin carboxylase (449 aa).

In terms of domain architecture, Biotin carboxylation spans 1–445 (MLDKIVIANR…NIHYLEKKLG (445 aa)). Residues lysine 116, lysine 159, 165–166 (GG), 201–204 (EKYL), histidine 209, and histidine 236 each bind ATP. In terms of domain architecture, ATP-grasp spans 120 to 317 (IAAMKKAGVP…LIKEQLRIAA (198 aa)). Residue lysine 238 participates in hydrogencarbonate binding. The ATP site is built by glutamate 276 and glutamate 288. Glutamate 276, glutamate 288, and asparagine 290 together coordinate Mg(2+). Residues glutamate 276, glutamate 288, and asparagine 290 each coordinate Mn(2+). Residues arginine 292, valine 295, and arginine 338 each coordinate hydrogencarbonate. Residue arginine 292 is part of the active site. Position 338 (arginine 338) interacts with biotin.

Acetyl-CoA carboxylase is a heterohexamer of biotin carboxyl carrier protein, biotin carboxylase and the two subunits of carboxyl transferase in a 2:2 complex. Mg(2+) is required as a cofactor. The cofactor is Mn(2+).

It carries out the reaction N(6)-biotinyl-L-lysyl-[protein] + hydrogencarbonate + ATP = N(6)-carboxybiotinyl-L-lysyl-[protein] + ADP + phosphate + H(+). The protein operates within lipid metabolism; malonyl-CoA biosynthesis; malonyl-CoA from acetyl-CoA: step 1/1. This protein is a component of the acetyl coenzyme A carboxylase complex; first, biotin carboxylase catalyzes the carboxylation of the carrier protein and then the transcarboxylase transfers the carboxyl group to form malonyl-CoA. The sequence is that of Biotin carboxylase (accC) from Escherichia coli O157:H7.